The sequence spans 505 residues: Glycerol kinase (505 aa).

Thr15 is a binding site for ADP. ATP-binding residues include Thr15, Thr16, and Ser17. Residue Thr15 coordinates sn-glycerol 3-phosphate. An ADP-binding site is contributed by Arg19. Positions 85, 86, 136, and 249 each coordinate sn-glycerol 3-phosphate. Residues Arg85, Glu86, Tyr136, Asp249, and Gln250 each coordinate glycerol. Residues Thr271 and Gly314 each contribute to the ADP site. 4 residues coordinate ATP: Thr271, Gly314, Gln318, and Gly415. Gly415 and Asn419 together coordinate ADP.

Belongs to the FGGY kinase family.

The catalysed reaction is glycerol + ATP = sn-glycerol 3-phosphate + ADP + H(+). The protein operates within polyol metabolism; glycerol degradation via glycerol kinase pathway; sn-glycerol 3-phosphate from glycerol: step 1/1. Its activity is regulated as follows. Inhibited by fructose 1,6-bisphosphate (FBP). Functionally, key enzyme in the regulation of glycerol uptake and metabolism. Catalyzes the phosphorylation of glycerol to yield sn-glycerol 3-phosphate. This is Glycerol kinase from Mycoplasma mycoides subsp. mycoides SC (strain CCUG 32753 / NCTC 10114 / PG1).